Reading from the N-terminus, the 529-residue chain is Peptide chain release factor 3 (529 aa).

Residues 10–279 (EQRRCFGIIS…ALVEMAPAPG (270 aa)) form the tr-type G domain. GTP is bound by residues 19–26 (SHPDAGKT), 87–91 (DTPGH), and 141–144 (NKMD).

It belongs to the TRAFAC class translation factor GTPase superfamily. Classic translation factor GTPase family. PrfC subfamily.

Its subcellular location is the cytoplasm. Its function is as follows. Increases the formation of ribosomal termination complexes and stimulates activities of RF-1 and RF-2. It binds guanine nucleotides and has strong preference for UGA stop codons. It may interact directly with the ribosome. The stimulation of RF-1 and RF-2 is significantly reduced by GTP and GDP, but not by GMP. This Desulfatibacillum aliphaticivorans protein is Peptide chain release factor 3.